A 477-amino-acid chain; its full sequence is Bile acid transporter (477 aa).

A run of 15 helical transmembrane segments spans residues phenylalanine 13–leucine 33, tryptophan 50–glycine 70, isoleucine 83–leucine 103, phenylalanine 107–glutamate 127, leucine 139–methionine 159, valine 166–isoleucine 186, leucine 206–tryptophan 226, serine 228–valine 248, leucine 272–valine 292, isoleucine 301–isoleucine 321, valine 333–alanine 353, isoleucine 359–methionine 379, valine 381–phenylalanine 401, alanine 406–alanine 426, and isoleucine 444–leucine 464.

Belongs to the major facilitator superfamily.

Its subcellular location is the cell membrane. The protein operates within lipid metabolism; bile acid degradation. The sequence is that of Bile acid transporter (baiG) from Clostridium scindens (strain JCM 10418 / VPI 12708).